Reading from the N-terminus, the 143-residue chain is MNCFSFSFIIIVLCAGSSNAKFREKNSVVFKNSLGVKNVLKIHCTSKDDDLGYHYLRPGVQIYEFRFHDSVLKTKFDCELWQGRGPTYKFYANFRAYKSGGLIAHYGKKNIWEAREDGIYFTHGKEIPKLEYKWSPIGKPPSP.

Positions 1–20 (MNCFSFSFIIIVLCAGSSNA) are cleaved as a signal peptide.

Belongs to the plant self-incompatibility (S1) protein family.

Its subcellular location is the secreted. The protein is S-protein homolog 11 of Arabidopsis thaliana (Mouse-ear cress).